The chain runs to 30 residues: Brevinin-2PTa (30 aa).

Cys24 and Cys30 are joined by a disulfide.

As to expression, expressed by the skin glands.

The protein localises to the secreted. Has antibacterial activity against the Gram-positive bacterium S.aureus ATCC 25923 (MIC=18 uM) and the Gram-negative bacterium E.coli ATCC 25726 (MIC=18 uM). The sequence is that of Brevinin-2PTa from Pulchrana picturata (Malaysian fire frog).